We begin with the raw amino-acid sequence, 612 residues long: MTTQAPPTSLLPLSPEQLARLQAAVGEFSPTQMAWLSGYFWGRVNQQPGAVASPAVAAPPPVTVTLISASQTGNARRLAEQLRDDLLAAQLSVNLVNAGDYKFKQIAQERLLVVVASTQGEGEPAEEAVALHKFLFSKKAPKLPETAFAVFGLGDTSYEHFCQAGKDFDSKLAELGAQRLLDRVDADVEYQVQAQQWRQQVVATLQAKVPAQSTAPTQFIAPTQSTTPAAAAITSGGTTTVSPYSKTAPLTAQLSVQQKVTGRNSEKDVRHIEIDLGDSGLRYQPGDALGVWFDNDPALVEELLALLWLKGDEPVSIDGQNMPLAQALLSHLELTQNTTLIVDKYAALSRDETLIALLADKPALQLYAKNTPFVDMVRQAPSDLNADQLVGLLRPLTPRLYSIASSQAETENEVHITVGVVRYDIDGRARSGGASGYLADRLEVDGDIRVFIEHNDNFRLPANPETPVIMIGPGTGIAPFRAFMQQREVDGASGKNWLFFGNPHFTEDFLYQVEWQRYVKEGVLTRIDLAWSRDQAHKIYVQDKLREQGAELWNWIQQGAHIYVCGDANRMAKDVEQVLLDVVALHGAMDAEQADEYLSELRQARRYQRDVY.

One can recognise a Flavodoxin-like domain in the interval 64 to 202 (VTLISASQTG…QAQQWRQQVV (139 aa)). FMN-binding positions include 70 to 75 (SQTGNA), 117 to 120 (STQG), and 153 to 162 (LGDTSYEHFC). The region spanning 247–461 (TAPLTAQLSV…IEHNDNFRLP (215 aa)) is the FAD-binding FR-type domain. Residues Thr335, Lys369, 399-402 (RLYS), 417-419 (TVG), Tyr423, and 432-435 (GGAS) contribute to the FAD site. NADP(+) is bound by residues 532–533 (SR), 538–542 (KIYVQ), and Asp574. An FAD-binding site is contributed by Tyr612.

Belongs to the NADPH-dependent sulphite reductase flavoprotein subunit CysJ family. This sequence in the N-terminal section; belongs to the flavodoxin family. It in the C-terminal section; belongs to the flavoprotein pyridine nucleotide cytochrome reductase family. As to quaternary structure, alpha(8)-beta(8). The alpha component is a flavoprotein, the beta component is a hemoprotein. FAD is required as a cofactor. It depends on FMN as a cofactor.

It catalyses the reaction hydrogen sulfide + 3 NADP(+) + 3 H2O = sulfite + 3 NADPH + 4 H(+). It participates in sulfur metabolism; hydrogen sulfide biosynthesis; hydrogen sulfide from sulfite (NADPH route): step 1/1. Its function is as follows. Component of the sulfite reductase complex that catalyzes the 6-electron reduction of sulfite to sulfide. This is one of several activities required for the biosynthesis of L-cysteine from sulfate. The flavoprotein component catalyzes the electron flow from NADPH -&gt; FAD -&gt; FMN to the hemoprotein component. The protein is Sulfite reductase [NADPH] flavoprotein alpha-component of Yersinia pseudotuberculosis serotype O:1b (strain IP 31758).